Here is an 859-residue protein sequence, read N- to C-terminus: Transforming growth factor-beta receptor-associated protein 1 (859 aa).

Residues 24–297 (RGLLECVECC…HILQDFEGRV (274 aa)) enclose the CNH domain. Residues 563–727 (KRPLDEQQSG…LLAVYLGPGP (165 aa)) form a CHCR repeat.

The protein belongs to the TRAP1 family. Interacts with TGFBR2 and ACVR2B; in the absence of ligand stimulation. Interacts with TGFBR1, ACVRL1, BMPR1A and ACVR1B; in the absence of ligand stimulation and to a less extent. Interacts with SMAD4; the interaction seems to be mutually exclusive with the interaction of SMAD4 and phosphorylated SMAD2. May interact with ALOX5. Interacts with RAB5C. Interacts with VPS8, VPS11 and VPS16. Component of the putative class C core vacuole/endosome tethering (CORVET) complex; the core of which composed of the class C Vps proteins VPS11, VPS16, VPS18 and VPS33A, is associated with VPS8 and TGFBRAP1.

It localises to the cytoplasm. The protein localises to the early endosome. In terms of biological role, plays a role in the TGF-beta/activin signaling pathway. It associates with inactive heteromeric TGF-beta and activin receptor complexes, mainly through the type II receptor, and is released upon activation of signaling. May recruit SMAD4 to the vicinity of the receptor complex and facilitate its interaction with receptor-regulated Smads, such as SMAD2. Functionally, plays a role in vesicle-mediated protein trafficking of the endocytic membrane transport pathway. Believed to act as a component of the putative CORVET endosomal tethering complexes which is proposed to be involved in the Rab5-to-Rab7 endosome conversion probably implicating MON1A/B, and via binding SNAREs and SNARE complexes to mediate tethering and docking events during SNARE-mediated membrane fusion. The CORVET complex is proposed to function as a Rab5 effector to mediate early endosome fusion probably in specific endosome subpopulations. Functions predominantly in APPL1-containing endosomes and in degradative but not recycling trafficking of endocytosed cargo. In Bos taurus (Bovine), this protein is Transforming growth factor-beta receptor-associated protein 1 (TGFBRAP1).